We begin with the raw amino-acid sequence, 294 residues long: Dolichol-phosphate mannosyltransferase (294 aa).

The segment at 1–27 (MSIALDMDASAKMRKQPGSSGWSTSST) is disordered. The Cytoplasmic segment spans residues 1 to 263 (MSIALDMDAS…QQLVELYRFR (263 aa)). Positions 17–27 (PGSSGWSTSST) are enriched in low complexity. Residues Pro-35, Glu-39, Val-70, Asp-72, Asp-123, Ala-124, Asp-125, Gln-127, Arg-151, Lys-211, Arg-237, and Lys-243 each coordinate GDP-alpha-D-mannose. Asp-125 and Gln-127 together coordinate Mg(2+). Residues Asp-125 and Gln-127 each coordinate Mn(2+). A helical transmembrane segment spans residues 264–284 (FGTVPIVFVLIVLLVLALYIW). The Lumenal segment spans residues 285 to 294 (SHVLAPMLGA).

The protein belongs to the glycosyltransferase 2 family. The cofactor is Mg(2+). Mn(2+) serves as cofactor. Requires Ca(2+) as cofactor.

The protein resides in the endoplasmic reticulum membrane. It carries out the reaction a di-trans,poly-cis-dolichyl phosphate + GDP-alpha-D-mannose = a di-trans,poly-cis-dolichyl beta-D-mannosyl phosphate + GDP. The protein operates within protein modification; protein glycosylation. Transfers mannose from GDP-mannose to dolichol monophosphate to form dolichol phosphate mannose (Dol-P-Man) which is the mannosyl donor in pathways leading to N-glycosylation, glycosyl phosphatidylinositol membrane anchoring, and O-mannosylation of proteins. This Mycosarcoma maydis (Corn smut fungus) protein is Dolichol-phosphate mannosyltransferase (DPM1).